A 609-amino-acid polypeptide reads, in one-letter code: UvrABC system protein C (609 aa).

The 79-residue stretch at 16–94 (HLPGVYRHLD…IKSLRPRYNI (79 aa)) folds into the GIY-YIG domain. Positions 203-238 (REVMDEIEARMLQASTELRFEEAAVLRDQMGSLSKV) constitute a UVR domain.

This sequence belongs to the UvrC family. In terms of assembly, interacts with UvrB in an incision complex.

The protein resides in the cytoplasm. In terms of biological role, the UvrABC repair system catalyzes the recognition and processing of DNA lesions. UvrC both incises the 5' and 3' sides of the lesion. The N-terminal half is responsible for the 3' incision and the C-terminal half is responsible for the 5' incision. The chain is UvrABC system protein C from Bordetella bronchiseptica (strain ATCC BAA-588 / NCTC 13252 / RB50) (Alcaligenes bronchisepticus).